Consider the following 874-residue polypeptide: Bifunctional apolipoprotein N-acyltransferase/polyprenol monophosphomannose synthase (874 aa).

The apolipoprotein N-acyltransferase stretch occupies residues 1-593; sequence MKLGAWVAAQ…GRHRATSRSY (593 aa). Helical transmembrane passes span 23–42, 72–89, 94–115, 177–194, and 206–223; these read TRLV…FPPR, YGLL…PWIG, PGPW…GLFA, VALV…IEKW, and AVVL…AAIV. Positions 241–497 constitute a CN hydrolase domain; it reads VTVAVVQGNV…PAYLDSQVRL (257 aa). The active-site Proton acceptor is E294. Residue K359 is part of the active site. Catalysis depends on C409, which acts as the Nucleophile. A helical transmembrane segment spans residues 509 to 526; that stretch reads PILQWILVGAAAAVVLVA. 2 disordered regions span residues 533–609 and 852–874; these read FPRP…NRPS and RARP…DVTE. The polyprenol monophosphomannose synthase stretch occupies residues 594-874; it reads MTTGQPAPPA…SRVSRADVTE (281 aa).

In the N-terminal section; belongs to the CN hydrolase family. Apolipoprotein N-acyltransferase subfamily. It in the C-terminal section; belongs to the glycosyltransferase 2 family.

The protein resides in the cell membrane. The catalysed reaction is N-terminal S-1,2-diacyl-sn-glyceryl-L-cysteinyl-[lipoprotein] + a glycerophospholipid = N-acyl-S-1,2-diacyl-sn-glyceryl-L-cysteinyl-[lipoprotein] + a 2-acyl-sn-glycero-3-phospholipid + H(+). The enzyme catalyses a di-trans,poly-cis-dolichyl phosphate + GDP-alpha-D-mannose = a di-trans,poly-cis-dolichyl beta-D-mannosyl phosphate + GDP. It functions in the pathway protein modification; lipoprotein biosynthesis (N-acyl transfer). Its function is as follows. Catalyzes the phospholipid dependent N-acylation of the N-terminal cysteine of apolipoprotein, the last step in lipoprotein maturation. Functionally, transfers mannose from GDP-mannose to lipid acceptors to form polyprenol monophosphomannose (PPM). PMM is an alkai-stable sugar donor which adds mannose-phosphate residues to triacylated-phosphatidyl-myo-inositol mannosides (PIM2), eventually leading to generation of the cell wall glycolipid lipoglycan modulins lipoarabinomannan (LAM) and lipomannan (LM). The sequence is that of Bifunctional apolipoprotein N-acyltransferase/polyprenol monophosphomannose synthase from Mycobacterium bovis (strain BCG / Pasteur 1173P2).